Reading from the N-terminus, the 99-residue chain is Integration host factor subunit alpha (99 aa).

The interval 49–71 (FGNFDLRDKNQRPGRNPKTGEDI) is disordered.

This sequence belongs to the bacterial histone-like protein family. In terms of assembly, heterodimer of an alpha and a beta chain.

In terms of biological role, this protein is one of the two subunits of integration host factor, a specific DNA-binding protein that functions in genetic recombination as well as in transcriptional and translational control. In Shewanella denitrificans (strain OS217 / ATCC BAA-1090 / DSM 15013), this protein is Integration host factor subunit alpha.